A 501-amino-acid chain; its full sequence is Acid-sensing ion channel 1A (501 aa).

Residues 1-54 (MKTSVMDLKVEPMDIDFDQPPPLQVFAHTSTLHGISHIFSYEKITAKCCLWVVF) are Cytoplasmic-facing. A helical membrane pass occupies residues 55–71 (FLSSLTFLMYVCIDRIQ). Residues 72–429 (FYLEYPHVTK…ETIEQRKAYE (358 aa)) lie on the Extracellular side of the membrane. Intrachain disulfides connect Cys98–Cys199, Cys177–Cys184, Cys294–Cys369, Cys312–Cys365, Cys316–Cys363, Cys325–Cys347, and Cys327–Cys339. N-linked (GlcNAc...) asparagine glycosylation occurs at Asn164. Asn370 is a glycosylation site (N-linked (GlcNAc...) asparagine). The discontinuously helical transmembrane segment at 430–460 (VAGLLGDIGGQMGLFIGASILTILELFDYLY) threads the bilayer. A GAS motif; ion selectivity filter motif is present at residues 446–448 (GAS). Residues 461–501 (EVMKYRLCRCSNKKHHNNNNNTDHNAVFSLDDVNCHVSKFH) lie on the Cytoplasmic side of the membrane.

Belongs to the amiloride-sensitive sodium channel (TC 1.A.6) family. ASIC1 subfamily. Homotrimer. Heterotrimer; with other ASIC proteins producing channel with different properties. Interacts with asic1c. As to expression, expressed in central nervous system. Faintly expressed in the trunk, presumably in dorsal root ganglia.

It is found in the cell membrane. Its subcellular location is the postsynaptic cell membrane. The protein localises to the cell projection. It localises to the dendrite. It carries out the reaction Na(+)(in) = Na(+)(out). It catalyses the reaction K(+)(in) = K(+)(out). The enzyme catalyses Li(+)(in) = Li(+)(out). The catalysed reaction is Ca(2+)(in) = Ca(2+)(out). Its activity is regulated as follows. Inhibited by the diuretic drug amiloride. Functionally, forms voltage-independent, pH-gated trimeric sodium channels that act as postsynaptic excitatory receptors in the nervous system, playing a crucial role in regulating synaptic plasticity, learning, and memory. Upon extracellular pH drop this channel elicits transient, fast activating, and completely desensitizing inward currents. Displays high selectivity for sodium ions but can also permit the permeation of other cations. The sequence is that of Acid-sensing ion channel 1A (asic1a) from Danio rerio (Zebrafish).